A 174-amino-acid chain; its full sequence is Variant surface antigen B (174 aa).

The signal sequence occupies residues 1–29 (MKKSIFSKKLLVSFGSLVALASIPLIAIS). The N-palmitoyl cysteine moiety is linked to residue C30. Residue C30 is the site of S-diacylglycerol cysteine attachment. Positions 32 to 174 (QTNTDKSQQP…SQDSGNGSTK (143 aa)) are disordered. The span at 38 to 49 (SQQPGSGSSTSG) shows a compositional bias: low complexity. Residues 50 to 75 (GQSGTGLGSGTTTGGQSGTTTGGRSG) are compositionally biased toward gly residues. Over residues 76 to 97 (SGSSSSTTGGQTGTGSDSQDSG) the composition is skewed to low complexity. 7 repeat units span residues 88–99 (GTGSDSQDSGAK), 100–111 (GTGSDSQDSGAK), 112–123 (GTGSDSQDSGAK), 124–135 (GTGSDSQDSGAK), 136–147 (GTGSDSQDSGAK), 148–159 (GTGSDSQDSGAK), and 160–171 (GTGSDSQDSGNG). Residues 88–171 (GTGSDSQDSG…GSDSQDSGNG (84 aa)) are 7 X 12 AA tandem repeats. Positions 102–174 (GSDSQDSGAK…SQDSGNGSTK (73 aa)) are enriched in polar residues.

The protein resides in the cell membrane. In terms of biological role, responsible for the antigenic diversity for host adaptation. The sequence is that of Variant surface antigen B (vlpB) from Mesomycoplasma hyorhinis (Mycoplasma hyorhinis).